The following is a 103-amino-acid chain: NADH-quinone oxidoreductase subunit K (103 aa).

3 helical membrane-spanning segments follow: residues Met1–Val21, Ile29–Gly49, and Ala62–Val82. The tract at residues Gly84–Ser103 is disordered. A compositionally biased stretch (basic and acidic residues) spans Gly88–Ser103.

This sequence belongs to the complex I subunit 4L family. In terms of assembly, NDH-1 is composed of 14 different subunits. Subunits NuoA, H, J, K, L, M, N constitute the membrane sector of the complex.

It is found in the cell inner membrane. It carries out the reaction a quinone + NADH + 5 H(+)(in) = a quinol + NAD(+) + 4 H(+)(out). Functionally, NDH-1 shuttles electrons from NADH, via FMN and iron-sulfur (Fe-S) centers, to quinones in the respiratory chain. The immediate electron acceptor for the enzyme in this species is believed to be ubiquinone. Couples the redox reaction to proton translocation (for every two electrons transferred, four hydrogen ions are translocated across the cytoplasmic membrane), and thus conserves the redox energy in a proton gradient. The chain is NADH-quinone oxidoreductase subunit K from Solidesulfovibrio magneticus (strain ATCC 700980 / DSM 13731 / RS-1) (Desulfovibrio magneticus).